Consider the following 219-residue polypeptide: Interleukin-12 subunit alpha (219 aa).

Residues 1-22 (MCPARSLLLVATLVLLDYLSLA) form the signal peptide. N-linked (GlcNAc...) asparagine glycosylation is found at Asn24 and Asn93. Disulfide bonds link Cys37–Cys110, Cys64–Cys196, and Cys85–Cys123.

Belongs to the IL-6 superfamily. As to quaternary structure, heterodimer with IL12B; disulfide-linked. This heterodimer is known as interleukin IL-12. Heterodimer with EBI3/IL27B; not disulfide-linked. This heterodimer is known as interleukin IL-35. Interacts with NBR1; this interaction promotes IL-12 secretion.

Its subcellular location is the secreted. In terms of biological role, heterodimerizes with IL12B to form the IL-12 cytokine or with EBI3/IL27B to form the IL-35 cytokine. IL-12 is primarily produced by professional antigen-presenting cells (APCs) such as B-cells and dendritic cells (DCs) as well as macrophages and granulocytes and regulates T-cell and natural killer-cell responses, induces the production of interferon-gamma (IFN-gamma), favors the differentiation of T-helper 1 (Th1) cells and is an important link between innate resistance and adaptive immunity. Mechanistically, exerts its biological effects through a receptor composed of IL12R1 and IL12R2 subunits. Binding to the receptor results in the rapid tyrosine phosphorylation of a number of cellular substrates including the JAK family kinases TYK2 and JAK2. In turn, recruited STAT4 gets phosphorylated and translocates to the nucleus where it regulates cytokine/growth factor responsive genes. As part of IL-35, plays essential roles in maintaining the immune homeostasis of the liver microenvironment and also functions as an immune-suppressive cytokine. Mediates biological events through unconventional receptors composed of IL12RB2 and gp130/IL6ST heterodimers or homodimers. Signaling requires the transcription factors STAT1 and STAT4, which form a unique heterodimer that binds to distinct DNA sites. This chain is Interleukin-12 subunit alpha (IL12A), found in Papio anubis (Olive baboon).